The sequence spans 261 residues: G patch domain-containing protein 11 (261 aa).

Disordered stretches follow at residues 1–67 (MEEE…LNEA), 88–124 (ALGK…AEEN), and 184–213 (EAWY…LVEE). Composition is skewed to basic and acidic residues over residues 29–64 (RVKE…DTKL) and 111–124 (IGHE…AEEN). Residues 31–65 (KECYEKEEKHKEANIKNRQQKLKDVEKEKRDTKLN) adopt a coiled-coil conformation. The region spanning 70-116 (NENKGFALLQKMGYKKGQALGKKGDGIVEPIPLNIKTGRSGIGHEEM) is the G-patch domain. Residues 190-222 (KMNEQEADEEADEETEEDEDLVEEELSTLEKLQ) adopt a coiled-coil conformation. The segment covering 194–213 (QEADEEADEETEEDEDLVEE) has biased composition (acidic residues).

It belongs to the GPATCH11 family.

It is found in the chromosome. The protein localises to the centromere. It localises to the kinetochore. This is G patch domain-containing protein 11 (gpatch11) from Xenopus tropicalis (Western clawed frog).